Here is a 190-residue protein sequence, read N- to C-terminus: Potassium-transporting ATPase KdpC subunit (190 aa).

A helical transmembrane segment spans residues 10 to 30 (TFLFLLLITGGVYPLLTTALG).

It belongs to the KdpC family. As to quaternary structure, the system is composed of three essential subunits: KdpA, KdpB and KdpC.

Its subcellular location is the cell inner membrane. Functionally, part of the high-affinity ATP-driven potassium transport (or Kdp) system, which catalyzes the hydrolysis of ATP coupled with the electrogenic transport of potassium into the cytoplasm. This subunit acts as a catalytic chaperone that increases the ATP-binding affinity of the ATP-hydrolyzing subunit KdpB by the formation of a transient KdpB/KdpC/ATP ternary complex. The polypeptide is Potassium-transporting ATPase KdpC subunit (Escherichia coli O7:K1 (strain IAI39 / ExPEC)).